The primary structure comprises 535 residues: 3-hydroxyindolin-2-one monooxygenase (535 aa).

Transmembrane regions (helical) follow at residues 14–34 (VVQC…LLAI) and 469–489 (ICAG…NLIY). A heme-binding site is contributed by C470.

The protein belongs to the cytochrome P450 family. The cofactor is heme.

It is found in the membrane. The catalysed reaction is 3-hydroxyindolin-2-one + reduced [NADPH--hemoprotein reductase] + O2 = 2-hydroxy-2H-1,4-benzoxazin-3(4H)-one + oxidized [NADPH--hemoprotein reductase] + H2O + H(+). Its pathway is secondary metabolite biosynthesis; 2,4-dihydroxy-1,4-benzoxazin-3-one biosynthesis; 2,4-dihydroxy-1,4-benzoxazin-3-one from indoleglycerol phosphate: step 4/5. Catalyzes the conversion of 3-hydroxyindolin-2-one to 2-hydroxy-1,4-benzoxazin-3-one (HBOA). The protein is 3-hydroxyindolin-2-one monooxygenase (CYP71C1) of Zea mays (Maize).